An 87-amino-acid chain; its full sequence is Omega-lycotoxin-Am1d (87 aa).

An N-terminal signal peptide occupies residues 1–17; it reads MKLSIFFVLFFIAIAYC. The propeptide occupies 18 to 40; the sequence is QPEFLDDEEDEVEETLPVAEEGR. 4 disulfide bridges follow: cysteine 44–cysteine 59, cysteine 51–cysteine 64, cysteine 58–cysteine 84, and cysteine 66–cysteine 82.

Belongs to the neurotoxin omega-lctx family. Expressed by the venom gland.

Its subcellular location is the secreted. Modulates Cav2.1/CACNA1A voltage-gated calcium channels (P/Q-type currents) in rat cerebellar Purkinje cells and hippocampal CA1-CA3 neurons. At saturating concentrations (&gt;10 nM) decelerates activation kinetics and slightly increases peak amplitude without affecting deactivation kinetics. In vivo, does not cause death when intravenously injected into mice. In rat models, through its activity on Cav2.1/CACNA1A, has an ameliorative effect on memory defects provoked by hyperstimulation of N-methyl-D-aspartate receptors (NMDARs) in the hippocampus. The sequence is that of Omega-lycotoxin-Am1d from Alopecosa marikovskyi (Wolf spider).